The following is a 613-amino-acid chain: Na(+)/H(+) antiporter NhaA 1 (613 aa).

Residues methionine 1–proline 23 are disordered. Residues methionine 1–valine 408 are na(+)/H(+) antiporter NhaA. A run of 11 helical transmembrane segments spans residues alanine 29–tryptophan 49, glycine 81–glycine 101, alanine 110–phenylalanine 130, glutamine 138–isoleucine 158, isoleucine 168–phenylalanine 188, aspartate 191–valine 211, isoleucine 231–isoleucine 251, alanine 300–valine 320, tryptophan 337–leucine 357, glycine 377–isoleucine 397, and valine 408–threonine 428. The Thioredoxin domain occupies glycine 409 to arginine 613.

In the N-terminal section; belongs to the NhaA Na(+)/H(+) (TC 2.A.33) antiporter family.

It is found in the cell membrane. The enzyme catalyses Na(+)(in) + 2 H(+)(out) = Na(+)(out) + 2 H(+)(in). Functionally, na(+)/H(+) antiporter that extrudes sodium in exchange for external protons. The chain is Na(+)/H(+) antiporter NhaA 1 from Mycobacterium sp. (strain KMS).